The following is a 524-amino-acid chain: MSNIYALEPHTNAKVILHTTSGDIEIELWGKEAPRATRNFIQLCLEGYYDNTIFHRIVPGFLVQGGDPTGTGQGGESVYEDGFPDEFHSRLRFNRRGLVGVANTGQNDNGSQFFITLDRADELTKRHTLFGRVAGDTLFNVMKMTELEIDENERPLYPPRIKRTEIVINPFDDILPRITEREKRQQKELEKKKMLEEAKKKKAPKKKQLNLLSFGEEAAELEPPSHTVEKTKMKSAYDFMETSAPTPTELIEELKKPVKEESTVISEKKDDAKQEEENKKAEEEERKRKKALEEERKRQKEEEKKKMQENTSESRASAIEKLKQDIRNLSKTSSNTSDELIPKKDKKRSLVELEREKYASQKRKKMKKGDDTDVFNKLMSFQKKLSTAKEDEDAAAAKRDQPPCEIHGIPGCESCRDTTQDAEEDVSDAGWISHKLIFEKDLKGKDLMKRRETVDDYVVIDPRDREAKAKQEEYERKKGIKSSSSSQRRDRMDHDDKRYRTEKRSRSDRHRRSRSRDRYDDRRR.

One can recognise a PPIase cyclophilin-type domain in the interval 11–166; the sequence is TNAKVILHTT…YPPRIKRTEI (156 aa). Disordered regions lie at residues 243 to 371, 389 to 417, and 451 to 524; these read SAPT…KGDD, KEDE…SCRD, and RETV…DRRR. Basic and acidic residues-rich tracts occupy residues 252–308 and 318–328; these read EELK…KKMQ and AIEKLKQDIRN. Positions 329 to 338 are enriched in polar residues; sequence LSKTSSNTSD. The segment covering 340–359 has biased composition (basic and acidic residues); it reads LIPKKDKKRSLVELEREKYA. 2 stretches are compositionally biased toward basic and acidic residues: residues 461 to 477 and 487 to 505; these read DPRD…YERK and QRRD…EKRS. Residues 506-515 are compositionally biased toward basic residues; that stretch reads RSDRHRRSRS.

Belongs to the cyclophilin-type PPIase family. CWC27 subfamily. In terms of assembly, associated with the spliceosome.

Its subcellular location is the cytoplasm. The protein localises to the nucleus. It carries out the reaction [protein]-peptidylproline (omega=180) = [protein]-peptidylproline (omega=0). In terms of biological role, PPIases accelerate the folding of proteins. It catalyzes the cis-trans isomerization of proline imidic peptide bonds in oligopeptides. Involved in pre-mRNA splicing. The polypeptide is Peptidyl-prolyl isomerase cwc27 (cwc27) (Rhizopus delemar (strain RA 99-880 / ATCC MYA-4621 / FGSC 9543 / NRRL 43880) (Mucormycosis agent)).